The chain runs to 338 residues: Aspartate-semialdehyde dehydrogenase (338 aa).

NADP(+)-binding positions include 13-16 (TGNV) and 41-42 (NS). Arg-101 lines the phosphate pocket. The active-site Acyl-thioester intermediate is the Cys-132. Substrate is bound at residue Gln-159. 162–163 (SG) contacts NADP(+). Position 216 (Lys-216) interacts with phosphate. Substrate is bound at residue Arg-237. His-244 (proton acceptor) is an active-site residue. NADP(+) is bound at residue Asn-317.

The protein belongs to the aspartate-semialdehyde dehydrogenase family. Homodimer.

The catalysed reaction is L-aspartate 4-semialdehyde + phosphate + NADP(+) = 4-phospho-L-aspartate + NADPH + H(+). The protein operates within amino-acid biosynthesis; L-lysine biosynthesis via DAP pathway; (S)-tetrahydrodipicolinate from L-aspartate: step 2/4. It functions in the pathway amino-acid biosynthesis; L-methionine biosynthesis via de novo pathway; L-homoserine from L-aspartate: step 2/3. It participates in amino-acid biosynthesis; L-threonine biosynthesis; L-threonine from L-aspartate: step 2/5. Its function is as follows. Catalyzes the NADPH-dependent formation of L-aspartate-semialdehyde (L-ASA) by the reductive dephosphorylation of L-aspartyl-4-phosphate. The sequence is that of Aspartate-semialdehyde dehydrogenase from Rickettsia bellii (strain RML369-C).